We begin with the raw amino-acid sequence, 383 residues long: Dual-specificity RNA methyltransferase RlmN (383 aa).

Glu94 acts as the Proton acceptor in catalysis. A Radical SAM core domain is found at 100–339 (DGDRATLCVS…VTVRRTRGDD (240 aa)). An intrachain disulfide couples Cys107 to Cys344. Residues Cys114, Cys118, and Cys121 each contribute to the [4Fe-4S] cluster site. S-adenosyl-L-methionine is bound by residues 168 to 169 (GE), Ser200, 222 to 224 (SLH), and Asn301. Residue Cys344 is the S-methylcysteine intermediate of the active site.

Belongs to the radical SAM superfamily. RlmN family. It depends on [4Fe-4S] cluster as a cofactor.

The protein localises to the cytoplasm. It catalyses the reaction adenosine(2503) in 23S rRNA + 2 reduced [2Fe-2S]-[ferredoxin] + 2 S-adenosyl-L-methionine = 2-methyladenosine(2503) in 23S rRNA + 5'-deoxyadenosine + L-methionine + 2 oxidized [2Fe-2S]-[ferredoxin] + S-adenosyl-L-homocysteine. It carries out the reaction adenosine(37) in tRNA + 2 reduced [2Fe-2S]-[ferredoxin] + 2 S-adenosyl-L-methionine = 2-methyladenosine(37) in tRNA + 5'-deoxyadenosine + L-methionine + 2 oxidized [2Fe-2S]-[ferredoxin] + S-adenosyl-L-homocysteine. Its function is as follows. Specifically methylates position 2 of adenine 2503 in 23S rRNA and position 2 of adenine 37 in tRNAs. m2A2503 modification seems to play a crucial role in the proofreading step occurring at the peptidyl transferase center and thus would serve to optimize ribosomal fidelity. In Aliivibrio salmonicida (strain LFI1238) (Vibrio salmonicida (strain LFI1238)), this protein is Dual-specificity RNA methyltransferase RlmN.